An 84-amino-acid polypeptide reads, in one-letter code: Acyl carrier protein (84 aa).

The 76-residue stretch at 4 to 79 (NEIFEKVQDI…EVVDFIKSKL (76 aa)) folds into the Carrier domain. At Ser39 the chain carries O-(pantetheine 4'-phosphoryl)serine.

This sequence belongs to the acyl carrier protein (ACP) family. Post-translationally, 4'-phosphopantetheine is transferred from CoA to a specific serine of apo-ACP by AcpS. This modification is essential for activity because fatty acids are bound in thioester linkage to the sulfhydryl of the prosthetic group.

It localises to the plastid. It is found in the chloroplast. Its pathway is lipid metabolism; fatty acid biosynthesis. In terms of biological role, carrier of the growing fatty acid chain in fatty acid biosynthesis. The polypeptide is Acyl carrier protein (Porphyra purpurea (Red seaweed)).